The following is a 154-amino-acid chain: Aspartate carbamoyltransferase regulatory chain (154 aa).

4 residues coordinate Zn(2+): cysteine 109, cysteine 114, cysteine 138, and cysteine 141.

Belongs to the PyrI family. As to quaternary structure, contains catalytic and regulatory chains. The cofactor is Zn(2+).

In terms of biological role, involved in allosteric regulation of aspartate carbamoyltransferase. The chain is Aspartate carbamoyltransferase regulatory chain from Pectobacterium carotovorum subsp. carotovorum (strain PC1).